A 370-amino-acid polypeptide reads, in one-letter code: tRNA-specific 2-thiouridylase MnmA (370 aa).

Residues 7 to 14 and methionine 34 each bind ATP; that span reads ALSGGVDS. Residues 104–106 are interaction with target base in tRNA; it reads NPD. The Nucleophile role is filled by cysteine 109. Cysteine 109 and cysteine 202 form a disulfide bridge. Glycine 134 provides a ligand contact to ATP. Residues 152-154 form an interaction with tRNA region; it reads KDQ. Cysteine 202 functions as the Cysteine persulfide intermediate in the catalytic mechanism. Residues 308-309 form an interaction with tRNA region; sequence RY.

It belongs to the MnmA/TRMU family.

It is found in the cytoplasm. The enzyme catalyses S-sulfanyl-L-cysteinyl-[protein] + uridine(34) in tRNA + AH2 + ATP = 2-thiouridine(34) in tRNA + L-cysteinyl-[protein] + A + AMP + diphosphate + H(+). Functionally, catalyzes the 2-thiolation of uridine at the wobble position (U34) of tRNA, leading to the formation of s(2)U34. The chain is tRNA-specific 2-thiouridylase MnmA from Mycoplasma mobile (strain ATCC 43663 / 163K / NCTC 11711) (Mesomycoplasma mobile).